A 1184-amino-acid polypeptide reads, in one-letter code: DNA-directed RNA polymerase subunit beta (1184 aa).

The segment at 1160–1184 (DDDFTNQNDAFNIVQPENAAAEKTE) is disordered.

It belongs to the RNA polymerase beta chain family. As to quaternary structure, the RNAP catalytic core consists of 2 alpha, 1 beta, 1 beta' and 1 omega subunit. When a sigma factor is associated with the core the holoenzyme is formed, which can initiate transcription.

The catalysed reaction is RNA(n) + a ribonucleoside 5'-triphosphate = RNA(n+1) + diphosphate. Its function is as follows. DNA-dependent RNA polymerase catalyzes the transcription of DNA into RNA using the four ribonucleoside triphosphates as substrates. The polypeptide is DNA-directed RNA polymerase subunit beta (Listeria welshimeri serovar 6b (strain ATCC 35897 / DSM 20650 / CCUG 15529 / CIP 8149 / NCTC 11857 / SLCC 5334 / V8)).